Here is a 295-residue protein sequence, read N- to C-terminus: Septu protein PtuB (295 aa).

Its function is as follows. Component of antiviral defense system Septu type II, composed of PtuA and PtuB. Expression of Septu type II in B.subtilis (strain BEST7003) confers resistance to phages SBSphiC and SpBeta. May be a nuclease. The polypeptide is Septu protein PtuB (Bacillus mycoides (strain KBAB4) (Bacillus weihenstephanensis)).